A 214-amino-acid polypeptide reads, in one-letter code: Guanylate kinase (214 aa).

Positions 6 to 192 (GTLYIISAPS…ALEDLKAIFR (187 aa)) constitute a Guanylate kinase-like domain. ATP is bound at residue 13–20 (APSGAGKT).

This sequence belongs to the guanylate kinase family.

The protein resides in the cytoplasm. The enzyme catalyses GMP + ATP = GDP + ADP. Functionally, essential for recycling GMP and indirectly, cGMP. The protein is Guanylate kinase of Pseudomonas syringae pv. syringae (strain B728a).